A 1003-amino-acid polypeptide reads, in one-letter code: Putative non-structural protein 4 (1003 aa).

In Aedes pseudoscutellaris (Mosquito), this protein is Putative non-structural protein 4 (S4).